Reading from the N-terminus, the 510-residue chain is D-alanine--D-alanyl carrier protein ligase (510 aa).

Residue 157 to 158 (TS) coordinates ATP. Asp202 is a binding site for D-alanine. 297 to 302 (NTYGPT) serves as a coordination point for ATP. Residue Val306 participates in D-alanine binding. Asp389 and Lys498 together coordinate ATP. Lys498 provides a ligand contact to D-alanine.

Belongs to the ATP-dependent AMP-binding enzyme family. DltA subfamily.

The protein localises to the cytoplasm. It catalyses the reaction holo-[D-alanyl-carrier protein] + D-alanine + ATP = D-alanyl-[D-alanyl-carrier protein] + AMP + diphosphate. The protein operates within cell wall biogenesis; lipoteichoic acid biosynthesis. Its function is as follows. Catalyzes the first step in the D-alanylation of lipoteichoic acid (LTA), the activation of D-alanine and its transfer onto the D-alanyl carrier protein (Dcp) DltC. In an ATP-dependent two-step reaction, forms a high energy D-alanyl-AMP intermediate, followed by transfer of the D-alanyl residue as a thiol ester to the phosphopantheinyl prosthetic group of the Dcp. D-alanylation of LTA plays an important role in modulating the properties of the cell wall in Gram-positive bacteria, influencing the net charge of the cell wall. The chain is D-alanine--D-alanyl carrier protein ligase from Listeria innocua serovar 6a (strain ATCC BAA-680 / CLIP 11262).